The following is a 527-amino-acid chain: NAD(P)H-quinone oxidoreductase chain 4 1 (527 aa).

13 helical membrane passes run 6–26 (FPWL…VPII), 36–56 (WFAL…FYSS), 91–111 (LIIL…PVTF), 113–133 (PKLF…VFAV), 136–156 (LLLF…ILSI), 169–189 (FILY…TMAF), 212–232 (LFLY…FPLH), 243–263 (TAPA…YALL), 275–295 (AVFA…AALT), 306–326 (IAYS…SFTD), 331–351 (GAML…FMVG), 387–407 (LALP…GFAT), and 417–437 (VIIV…LLSM).

The protein belongs to the complex I subunit 4 family.

Its subcellular location is the cellular thylakoid membrane. The catalysed reaction is a plastoquinone + NADH + (n+1) H(+)(in) = a plastoquinol + NAD(+) + n H(+)(out). The enzyme catalyses a plastoquinone + NADPH + (n+1) H(+)(in) = a plastoquinol + NADP(+) + n H(+)(out). In terms of biological role, NDH-1 shuttles electrons from NAD(P)H, via FMN and iron-sulfur (Fe-S) centers, to quinones in the respiratory chain. The immediate electron acceptor for the enzyme in this species is believed to be plastoquinone. Couples the redox reaction to proton translocation (for every two electrons transferred, four hydrogen ions are translocated across the cytoplasmic membrane), and thus conserves the redox energy in a proton gradient. This chain is NAD(P)H-quinone oxidoreductase chain 4 1, found in Microcystis aeruginosa (strain NIES-843 / IAM M-2473).